The following is a 292-amino-acid chain: MPWIQLIIDTKAKYAEQVGDMLSANGAQAVTFVDAKDTPMYEPKPGEVMLWPETQVMGLYEADYDMDGVVARMSKSKVLGADFPHKLDQLEDKDWEREWMDNFHPMRFGQRLWICPSWRDVPDPSAVNVMLDPGLAFGTGTHPTTALCLRWLDALELSDKLVVDFGCGSGILGIAAIKLGAKRVVGIDIDPQALLSSQTNADRNHIGDKIELYLPEHQPELKADVVLANILAGPLRDLREVITAYCKSGGKLVLSGILAEQAQGINDLYSQDFHMEPIEIDGEWARVSGKRK.

S-adenosyl-L-methionine-binding residues include Thr145, Gly166, Asp188, and Asn229.

Belongs to the methyltransferase superfamily. PrmA family.

It is found in the cytoplasm. It carries out the reaction L-lysyl-[protein] + 3 S-adenosyl-L-methionine = N(6),N(6),N(6)-trimethyl-L-lysyl-[protein] + 3 S-adenosyl-L-homocysteine + 3 H(+). In terms of biological role, methylates ribosomal protein L11. In Pseudoalteromonas atlantica (strain T6c / ATCC BAA-1087), this protein is Ribosomal protein L11 methyltransferase.